Reading from the N-terminus, the 556-residue chain is 2-succinyl-5-enolpyruvyl-6-hydroxy-3-cyclohexene-1-carboxylate synthase (556 aa).

The protein belongs to the TPP enzyme family. MenD subfamily. In terms of assembly, homodimer. Mg(2+) is required as a cofactor. The cofactor is Mn(2+). Requires thiamine diphosphate as cofactor.

The catalysed reaction is isochorismate + 2-oxoglutarate + H(+) = 5-enolpyruvoyl-6-hydroxy-2-succinyl-cyclohex-3-ene-1-carboxylate + CO2. Its pathway is quinol/quinone metabolism; 1,4-dihydroxy-2-naphthoate biosynthesis; 1,4-dihydroxy-2-naphthoate from chorismate: step 2/7. It functions in the pathway quinol/quinone metabolism; menaquinone biosynthesis. Catalyzes the thiamine diphosphate-dependent decarboxylation of 2-oxoglutarate and the subsequent addition of the resulting succinic semialdehyde-thiamine pyrophosphate anion to isochorismate to yield 2-succinyl-5-enolpyruvyl-6-hydroxy-3-cyclohexene-1-carboxylate (SEPHCHC). This Klebsiella pneumoniae subsp. pneumoniae (strain ATCC 700721 / MGH 78578) protein is 2-succinyl-5-enolpyruvyl-6-hydroxy-3-cyclohexene-1-carboxylate synthase.